Consider the following 645-residue polypeptide: Protein hrpC2 (645 aa).

7 helical membrane-spanning segments follow: residues 18–34 (VAIA…MILP), 43–59 (LLGI…MVTM), 108–124 (LVVG…FLII), 201–217 (IAGL…GIVV), 243–259 (VSQI…GVMI), 285–301 (ARAL…FAFV), and 308–324 (LFLL…YTIW). A disordered region spans residues 334 to 354 (DQRKLPSASRKGAKGEAPHIR).

Belongs to the FHIPEP (flagella/HR/invasion proteins export pore) family.

It is found in the cell inner membrane. Involved in the secretion of a proteinaceous elicitor of the hypersensitivity response in plants. This chain is Protein hrpC2 (hrpC2), found in Xanthomonas euvesicatoria.